The sequence spans 350 residues: NAD-dependent protein deacetylase sirtuin-2 (350 aa).

Positions 4 to 14 (LRNLFTQTLGL) match the Nuclear export signal motif. Serine 16 carries the phosphoserine modification. Positions 20–301 (RLLDELTLEG…LALADLLGWK (282 aa)) constitute a Deacetylase sirtuin-type domain. Residues 48-52 (AGIST) and 58-60 (DFR) contribute to the NAD(+) site. The residue at position 63 (serine 63) is a Phosphoserine. 130-133 (QNID) is a binding site for NAD(+). Histidine 150 functions as the Proton acceptor in the catalytic mechanism. 2 residues coordinate Zn(2+): cysteine 158 and cysteine 163. Serine 170 bears the Phosphoserine mark. Residues cysteine 184 and cysteine 187 each contribute to the Zn(2+) site. Residues 225–226 (TS), 249–251 (NKE), and cysteine 287 each bind NAD(+). The disordered stretch occupies residues 312 to 350 (ANIDAQSGSQASNPSATVSPRKSPPPAKEAARTKEKEEH). Residues 315 to 331 (DAQSGSQASNPSATVSP) are compositionally biased toward polar residues. Residues serine 330 and serine 334 each carry the phosphoserine modification. Over residues 340–350 (EAARTKEKEEH) the composition is skewed to basic and acidic residues.

The protein belongs to the sirtuin family. Class I subfamily. As to quaternary structure, interacts with CDC20, FOXO3 and FZR1. Associates with microtubules in primary cortical mature neurons. Homotrimer. Interacts (via both phosphorylated, unphosphorylated, active or inactive forms) with HDAC6; the interaction is necessary for the complex to interact with alpha-tubulin, suggesting that these proteins belong to a large complex that deacetylates the cytoskeleton. Interacts with FOXO1; the interaction is disrupted upon serum-starvation or oxidative stress, leading to increased level of acetylated FOXO1 and induction of autophagy. Interacts with RELA; the interaction occurs in the cytoplasm and is increased in a TNF-alpha-dependent manner. Interacts with HOXA10; the interaction is direct. Interacts with YWHAB and YWHAG; the interactions occur in a AKT-dependent manner and increase SIRT2-dependent TP53 deacetylation. Interacts with MAPK1/ERK2 and MAPK3/ERK1; the interactions increase SIRT2 stability and deacetylation activity. Interacts (phosphorylated form) with KMT5A isoform 2; the interaction is direct, stimulates KMT5A-mediated methyltransferase activity on histone at 'Lys-20' (H4K20me1) and is increased in a H(2)O(2)-induced oxidative stress-dependent manner. Interacts with G6PD; the interaction is enhanced by H(2)O(2) treatment. Interacts with a G1/S-specific cyclin E-CDK2 complex. Interacts with AURKA, CDK5R1 (p35 form) and CDK5 and HIF1A. Interacts with the tRNA ligase SARS1; recruited to the VEGFA promoter via interaction with SARS1. Interacts with BEX4; negatively regulates alpha-tubulin deacetylation by SIRT2. It depends on Zn(2+) as a cofactor. In terms of processing, phosphorylated at phosphoserine and phosphothreonine. Phosphorylated at Ser-330 by a mitotic kinase CDK1/cyclin B at the G2/M transition; phosphorylation regulates the delay in cell-cycle progression. Phosphorylated at Ser-330 by a mitotic kinase G1/S-specific cyclin E/Cdk2 complex; phosphorylation inactivates SIRT2-mediated alpha-tubulin deacetylation and thereby negatively regulates cell adhesion, cell migration and neurite outgrowth during neuronal differentiation. Phosphorylated by cyclin A/Cdk2 and p35-Cdk5 complexes and to a lesser extent by the cyclin D3/Cdk4 and cyclin B/Cdk1, in vitro. Dephosphorylated at Ser-330 by CDC14A and CDC14B around early anaphase. Post-translationally, acetylated by EP300; acetylation leads both to the decreased of SIRT2-mediated alpha-tubulin deacetylase activity and SIRT2-mediated down-regulation of TP53 transcriptional activity. Ubiquitinated. In terms of tissue distribution, expressed in the cerebellum, cerebral cortex and cervival spinal cord. Expressed in Purkinje cells, oligodendrocytes and Schwann cells (at protein level). Expressed in the central nervous system (CNS).

The protein resides in the nucleus. It is found in the cytoplasm. It localises to the perinuclear region. Its subcellular location is the cytoskeleton. The protein localises to the microtubule organizing center. The protein resides in the centrosome. It is found in the centriole. It localises to the spindle. Its subcellular location is the midbody. The protein localises to the chromosome. The protein resides in the perikaryon. It is found in the cell projection. It localises to the growth cone. Its subcellular location is the myelin membrane. The catalysed reaction is N(6)-acetyl-L-lysyl-[protein] + NAD(+) + H2O = 2''-O-acetyl-ADP-D-ribose + nicotinamide + L-lysyl-[protein]. It carries out the reaction N(6)-tetradecanoyl-L-lysyl-[protein] + NAD(+) + H2O = 2''-O-tetradecanoyl-ADP-D-ribose + nicotinamide + L-lysyl-[protein]. It catalyses the reaction N(6)-hexadecanoyl-L-lysyl-[protein] + NAD(+) + H2O = 2''-O-hexadecanoyl-ADP-D-ribose + nicotinamide + L-lysyl-[protein]. With respect to regulation, inhibited by Sirtinol, A3 and M15 small molecules. Inhibited by nicotinamide. Inhibited by a macrocyclic peptide inhibitor S2iL5. Inhibited by EP300-induced acetylation. Functionally, NAD-dependent protein deacetylase, which deacetylates internal lysines on histone and alpha-tubulin as well as many other proteins such as key transcription factors. Participates in the modulation of multiple and diverse biological processes such as cell cycle control, genomic integrity, microtubule dynamics, cell differentiation, metabolic networks, and autophagy. Plays a major role in the control of cell cycle progression and genomic stability. Functions in the antephase checkpoint preventing precocious mitotic entry in response to microtubule stress agents, and hence allowing proper inheritance of chromosomes. Positively regulates the anaphase promoting complex/cyclosome (APC/C) ubiquitin ligase complex activity by deacetylating CDC20 and FZR1, then allowing progression through mitosis. Associates both with chromatin at transcriptional start sites (TSSs) and enhancers of active genes. Plays a role in cell cycle and chromatin compaction through epigenetic modulation of the regulation of histone H4 'Lys-20' methylation (H4K20me1) during early mitosis. Specifically deacetylates histone H4 at 'Lys-16' (H4K16ac) between the G2/M transition and metaphase enabling H4K20me1 deposition by KMT5A leading to ulterior levels of H4K20me2 and H4K20me3 deposition throughout cell cycle, and mitotic S-phase progression. Deacetylates KMT5A modulating KMT5A chromatin localization during the mitotic stress response. Also deacetylates histone H3 at 'Lys-57' (H3K56ac) during the mitotic G2/M transition. During oocyte meiosis progression, may deacetylate histone H4 at 'Lys-16' (H4K16ac) and alpha-tubulin, regulating spindle assembly and chromosome alignment by influencing microtubule dynamics and kinetochore function. Deacetylates histone H4 at 'Lys-16' (H4K16ac) at the VEGFA promoter and thereby contributes to regulate expression of VEGFA, a key regulator of angiogenesis. Deacetylates alpha-tubulin at 'Lys-40' and hence controls neuronal motility, oligodendroglial cell arbor projection processes and proliferation of non-neuronal cells. Phosphorylation at Ser-368 by a G1/S-specific cyclin E-CDK2 complex inactivates SIRT2-mediated alpha-tubulin deacetylation, negatively regulating cell adhesion, cell migration and neurite outgrowth during neuronal differentiation. Deacetylates PARD3 and participates in the regulation of Schwann cell peripheral myelination formation during early postnatal development and during postinjury remyelination. Involved in several cellular metabolic pathways. Plays a role in the regulation of blood glucose homeostasis by deacetylating and stabilizing phosphoenolpyruvate carboxykinase PCK1 activity in response to low nutrient availability. Acts as a key regulator in the pentose phosphate pathway (PPP) by deacetylating and activating the glucose-6-phosphate G6PD enzyme, and therefore, stimulates the production of cytosolic NADPH to counteract oxidative damage. Maintains energy homeostasis in response to nutrient deprivation as well as energy expenditure by inhibiting adipogenesis and promoting lipolysis. Attenuates adipocyte differentiation by deacetylating and promoting FOXO1 interaction to PPARG and subsequent repression of PPARG-dependent transcriptional activity. Plays a role in the regulation of lysosome-mediated degradation of protein aggregates by autophagy in neuronal cells. Deacetylates FOXO1 in response to oxidative stress or serum deprivation, thereby negatively regulating FOXO1-mediated autophagy. Deacetylates a broad range of transcription factors and co-regulators regulating target gene expression. Deacetylates transcriptional factor FOXO3 stimulating the ubiquitin ligase SCF(SKP2)-mediated FOXO3 ubiquitination and degradation. Deacetylates HIF1A and therefore promotes HIF1A degradation and inhibition of HIF1A transcriptional activity in tumor cells in response to hypoxia. Deacetylates RELA in the cytoplasm inhibiting NF-kappaB-dependent transcription activation upon TNF-alpha stimulation. Inhibits transcriptional activation by deacetylating p53/TP53 and EP300. Also deacetylates EIF5A. Functions as a negative regulator on oxidative stress-tolerance in response to anoxia-reoxygenation conditions. Plays a role as tumor suppressor. In addition to protein deacetylase activity, also has activity toward long-chain fatty acyl groups and mediates protein-lysine demyristoylation and depalmitoylation of target proteins, such as ARF6 and KRAS, thereby regulating their association with membranes. The chain is NAD-dependent protein deacetylase sirtuin-2 (Sirt2) from Rattus norvegicus (Rat).